The following is a 175-amino-acid chain: Inorganic pyrophosphatase 1 (175 aa).

Residues K30, R44, and Y56 each coordinate substrate. Mg(2+) is bound by residues D66, D71, and D103. Substrate is bound at residue Y142.

The protein belongs to the PPase family. As to quaternary structure, homohexamer. It depends on Mg(2+) as a cofactor.

The protein resides in the cytoplasm. It catalyses the reaction diphosphate + H2O = 2 phosphate + H(+). In terms of biological role, catalyzes the hydrolysis of inorganic pyrophosphate (PPi) forming two phosphate ions. This Pseudomonas syringae pv. tomato (strain ATCC BAA-871 / DC3000) protein is Inorganic pyrophosphatase 1.